The following is a 565-amino-acid chain: Periplasmic trehalase (565 aa).

The N-terminal stretch at 1 to 30 is a signal peptide; it reads MKSPTPSRPQKMALIPACIFLCFAALSVQA. Residues arginine 152, 159–160, asparagine 196, 205–207, 277–279, and glycine 310 contribute to the substrate site; these read WD, RSQ, and RPE. Active-site proton donor/acceptor residues include aspartate 312 and glutamate 496. Glutamate 511 lines the substrate pocket. Positions 539 to 565 are disordered; sequence CDNVPATRPLSESTTQPLKQKEAEPTP.

It belongs to the glycosyl hydrolase 37 family. As to quaternary structure, monomer.

It localises to the periplasm. It catalyses the reaction alpha,alpha-trehalose + H2O = alpha-D-glucose + beta-D-glucose. Its function is as follows. Provides the cells with the ability to utilize trehalose at high osmolarity by splitting it into glucose molecules that can subsequently be taken up by the phosphotransferase-mediated uptake system. In Escherichia coli (strain SMS-3-5 / SECEC), this protein is Periplasmic trehalase.